Consider the following 349-residue polypeptide: Phosphoribosylformylglycinamidine cyclo-ligase (349 aa).

The protein belongs to the AIR synthase family.

Its subcellular location is the cytoplasm. The catalysed reaction is 2-formamido-N(1)-(5-O-phospho-beta-D-ribosyl)acetamidine + ATP = 5-amino-1-(5-phospho-beta-D-ribosyl)imidazole + ADP + phosphate + H(+). The protein operates within purine metabolism; IMP biosynthesis via de novo pathway; 5-amino-1-(5-phospho-D-ribosyl)imidazole from N(2)-formyl-N(1)-(5-phospho-D-ribosyl)glycinamide: step 2/2. The polypeptide is Phosphoribosylformylglycinamidine cyclo-ligase (Methanococcus maripaludis (strain C5 / ATCC BAA-1333)).